Reading from the N-terminus, the 101-residue chain is uncharacterized protein (101 aa).

A helical membrane pass occupies residues 68 to 90 (LAFAFCGRANTFISCFISFASLI).

The protein resides in the membrane. This is an uncharacterized protein from Saccharomyces cerevisiae (strain ATCC 204508 / S288c) (Baker's yeast).